Consider the following 94-residue polypeptide: Large ribosomal subunit protein eL14 (94 aa).

The protein belongs to the eukaryotic ribosomal protein eL14 family.

This chain is Large ribosomal subunit protein eL14, found in Methanopyrus kandleri (strain AV19 / DSM 6324 / JCM 9639 / NBRC 100938).